The primary structure comprises 329 residues: NAD(+) hydrolase TcpA (329 aa).

The MPN domain maps to 5–134 (VSISYLALEQ…ADCVRFYTVR (130 aa)). The 133-residue stretch at 192 to 324 (FEYDVFICHA…YVVNEILRVL (133 aa)) folds into the TIR domain. NAD(+) is bound by residues 201–202 (AH) and Ser231. The active site involves Glu267.

The catalysed reaction is NAD(+) + H2O = ADP-D-ribose + nicotinamide + H(+). Functionally, NAD(+) hydrolase (NADase) that catalyzes cleavage of NAD(+) into ADP-D-ribose (ADPR) and nicotinamide. This Theionarchaea archaeon (strain DG-70-1) protein is NAD(+) hydrolase TcpA.